The following is a 246-amino-acid chain: APPIQSRIIGGRECEKNSHPWQVAIYHYSSFQCGGVLVNPKWVLTAAHCKNDNYEVWLGRHNLFENENTAQFFGVTADFPHPGFNLSLLKXHTKADGKDYSHDLMLLRLQSPAKITDAVKVLELPTQEPELGSTCEASGWGSIEPGPDBFEFPDEIQCVQLTLLQNTFCABAHPBKVTESMLCAGYLPGGKDTCMGDSGGPLICNGMWQGITSWGHTPCGSANKPSIYTKLIFYLDWINDTITENP.

The propeptide occupies 1–7; it reads APPIQSR. A Peptidase S1 domain is found at 8–243; sequence IIGGRECEKN…YLDWINDTIT (236 aa). 5 disulfides stabilise this stretch: cysteine 14–cysteine 158, cysteine 33–cysteine 49, cysteine 135–cysteine 204, cysteine 169–cysteine 183, and cysteine 194–cysteine 219. The Charge relay system role is filled by histidine 48. A glycan (N-linked (GlcNAc...) asparagine) is linked at asparagine 85. Residues 85 to 104 form a kallikrein (autolysis) loop region; that stretch reads NLSLLKXHTKADGKDYSHDL. Aspartate 103 serves as the catalytic Charge relay system. The active-site Charge relay system is serine 198. Asparagine 239 is a glycosylation site (N-linked (GlcNAc...) asparagine).

This sequence belongs to the peptidase S1 family. Kallikrein subfamily. In terms of assembly, monomer.

It catalyses the reaction Preferential cleavage of Arg-|-Xaa bonds in small molecule substrates. Highly selective action to release kallidin (lysyl-bradykinin) from kininogen involves hydrolysis of Met-|-Xaa or Leu-|-Xaa.. Functionally, glandular kallikreins cleave Met-Lys and Arg-Ser bonds in kininogen to release Lys-bradykinin. The sequence is that of Glandular kallikrein from Sus scrofa (Pig).